A 454-amino-acid polypeptide reads, in one-letter code: Serine/threonine-protein kinase NLK2 (454 aa).

A Protein kinase domain is found at 67-356; it reads PEPDRPIGYG…AKDALAHPYL (290 aa). ATP-binding positions include 73 to 81 and Lys-96; that span reads IGYGAFGVV. Residue Asp-193 is the Proton acceptor of the active site.

This sequence belongs to the protein kinase superfamily. CMGC Ser/Thr protein kinase family. MAP kinase subfamily. In terms of assembly, interacts with sox11, hmgxb4/hmg2l1, rnf138/narf, stat3.1 and mef2a. The cofactor is Mg(2+).

The protein localises to the nucleus. The protein resides in the cytoplasm. It carries out the reaction L-seryl-[protein] + ATP = O-phospho-L-seryl-[protein] + ADP + H(+). The enzyme catalyses L-threonyl-[protein] + ATP = O-phospho-L-threonyl-[protein] + ADP + H(+). Activated by tyrosine and threonine phosphorylation. In terms of biological role, negatively regulates Wnt/beta-catenin-signaling during development. Plays a role together with sox11 in neural induction during early embryogenesis. Involved in TGFbeta-mediated mesoderm induction in early embryos, acting downstream of map3k7/tak1 to phosphorylate stat3. Augments the rnf138/narf-directed ubiquitination and degradation of tcf/lef by enhancing the association of rnf138/narf and tcf/lef. Phosphorylates mef2a to play a role in anterior neural development, including eye formation. This is Serine/threonine-protein kinase NLK2 (nlk.2) from Xenopus tropicalis (Western clawed frog).